The chain runs to 240 residues: Coiled-coil domain-containing protein 152 (240 aa).

Residues 55-223 adopt a coiled-coil conformation; the sequence is MQTKEVAMKQ…LEQRLSVSKD (169 aa).

The sequence is that of Coiled-coil domain-containing protein 152 (CCDC152) from Bos taurus (Bovine).